The following is a 334-amino-acid chain: Isopentenyl-diphosphate delta-isomerase (334 aa).

Position 5 to 6 (5 to 6) interacts with substrate; that stretch reads RK. Residues 60 to 62, serine 90, and asparagine 117 each bind FMN; that span reads AMT. Glutamine 147 lines the substrate pocket. Glutamate 148 is a binding site for Mg(2+). Residues lysine 179, serine 204, threonine 209, 253-255, and 274-275 contribute to the FMN site; these read GVR and SR.

This sequence belongs to the IPP isomerase type 2 family. In terms of assembly, homooctamer. Dimer of tetramers. It depends on FMN as a cofactor. The cofactor is NADPH. Mg(2+) is required as a cofactor.

The protein resides in the cytoplasm. The enzyme catalyses isopentenyl diphosphate = dimethylallyl diphosphate. Involved in the biosynthesis of isoprenoids. Catalyzes the 1,3-allylic rearrangement of the homoallylic substrate isopentenyl (IPP) to its allylic isomer, dimethylallyl diphosphate (DMAPP). This Streptococcus gordonii (strain Challis / ATCC 35105 / BCRC 15272 / CH1 / DL1 / V288) protein is Isopentenyl-diphosphate delta-isomerase.